The following is a 379-amino-acid chain: Wnt inhibitory factor 1 (379 aa).

Positions 1 to 28 are cleaved as a signal peptide; it reads MARRRAFPAFALRLWSILPCLLLLRADA. A WIF domain is found at 38–177; sequence LWIDAHQARV…PQNAIFFKTC (140 aa). N-linked (GlcNAc...) asparagine glycosylation is present at Asn88. 7 disulfide bridges follow: Cys140/Cys177, Cys182/Cys192, Cys186/Cys198, Cys200/Cys209, Cys214/Cys224, Cys218/Cys230, and Cys232/Cys241. 5 EGF-like domains span residues 178-210, 211-242, 243-271, 274-306, and 307-338; these read QQAE…PHCE, KALC…VNCD, KANC…LEGE, ELSK…DLCS, and KPVC…RHCN. Asn245 is a glycosylation site (N-linked (GlcNAc...) asparagine). Intrachain disulfides connect Cys246–Cys256, Cys250–Cys262, Cys278–Cys288, Cys282–Cys294, Cys296–Cys305, Cys310–Cys320, Cys314–Cys326, and Cys328–Cys337. Residues 348 to 379 are disordered; the sequence is APRPAGAGLERHTPSLKKAEDRRDPPESNYIW. Residues 356 to 373 show a composition bias toward basic and acidic residues; that stretch reads LERHTPSLKKAEDRRDPP.

As to quaternary structure, interacts with MYOC. In terms of tissue distribution, expression highest in heart and lung. Lower in brain and eye.

It localises to the secreted. In terms of biological role, binds to WNT proteins and inhibits their activities. May be involved in mesoderm segmentation. In Mus musculus (Mouse), this protein is Wnt inhibitory factor 1 (Wif1).